The sequence spans 388 residues: MAYSARLRKAVGAVRTTLSAVELCDVQAPEFAQHGDHAVASDAPLVLVACSGGRDSMALAAVSHIVCTSMGVRCGVVIVDHGLQEGSEQVAGEAANRCRALGLGPVIVRNATVQARGEGLEAAARQARYNELCAAARESGAIAVLLAHTMDDQAETVLIGLLRSRGVDALAGMPQVFTRSGVTFARPLLTLTRAETTGICEDLGVEYWDDPTNGDAVDGELPNDYPLRSRVRHDLLPAIERFAGFNVTRHFAESARLARMDKEYLDQRSDEVMGEAVTTVDWPASSAAVSTDTPRACAAGDTNDSSHGVGLMISVRRIAREPEAIRLRVIAHALSQAGVNASAAQIAAIDRLVVDWHGQGGVSLPRGYSANRKKHVIRVCQDGAHANR.

Residue 51-56 (SGGRDS) participates in ATP binding.

Belongs to the tRNA(Ile)-lysidine synthase family.

Its subcellular location is the cytoplasm. The catalysed reaction is cytidine(34) in tRNA(Ile2) + L-lysine + ATP = lysidine(34) in tRNA(Ile2) + AMP + diphosphate + H(+). Ligates lysine onto the cytidine present at position 34 of the AUA codon-specific tRNA(Ile) that contains the anticodon CAU, in an ATP-dependent manner. Cytidine is converted to lysidine, thus changing the amino acid specificity of the tRNA from methionine to isoleucine. This is tRNA(Ile)-lysidine synthase from Bifidobacterium longum (strain DJO10A).